Consider the following 362-residue polypeptide: Chemerin-like receptor 1 (362 aa).

Residues 1 to 37 (MEAEDYNASYEDYPDDVDPIVVLEELSPLEGRVVRIL) lie on the Extracellular side of the membrane. An N-linked (GlcNAc...) asparagine glycan is attached at Asn7. Residues 38–58 (LVAVYSVICLLGILGNGLVIV) traverse the membrane as a helical segment. Over 59-70 (MITCKMKRTVNT) the chain is Cytoplasmic. The helical transmembrane segment at 71 to 91 (VWFLNLAVADFLFNVFLPVHI) threads the bilayer. The Extracellular portion of the chain corresponds to 92 to 108 (AYAALDYHWVFGTAMCK). Cys107 and Cys184 form a disulfide bridge. Residues 109–129 (ISNFLLIHNMFTSVFLLTVIS) traverse the membrane as a helical segment. Topologically, residues 130–151 (FDRCVSVLLPVWSQNHRSVRLA) are cytoplasmic. Residues 152-172 (YTACLVIWVLAFFLSSPSLVF) form a helical membrane-spanning segment. Over 173–219 (RDTARLHGKISCFNNFSLSAAVSSPWPAHPQVDPVGSGRHKVVTITR) the chain is Extracellular. N-linked (GlcNAc...) asparagine glycosylation is present at Asn187. A helical membrane pass occupies residues 220–240 (FLCGFLVPGLITTACYLTIVY). Over 241–255 (KLQRSRLAKTKKPFK) the chain is Cytoplasmic. Residues 256–276 (IILTIIVTFFLCWCPYHAFYL) form a helical membrane-spanning segment. Residues 277 to 281 (LELRR) are Extracellular-facing. A helical membrane pass occupies residues 282 to 302 (GSVPPSVFSLGVPLATAIAIA). At 303–362 (NSCMNPILYVFMGQDFKKFRVALFSRLVNALSEDTGHSSYPSHRSFTKMSSMNERETGML) the chain is on the cytoplasmic side. The residue at position 334 (Ser334) is a Phosphoserine. Residues 336 to 362 (DTGHSSYPSHRSFTKMSSMNERETGML) are disordered. A Phosphothreonine modification is found at Thr337. A compositionally biased stretch (polar residues) spans 339 to 354 (HSSYPSHRSFTKMSSM). Phosphoserine is present on residues Ser344, Ser347, and Ser353.

It belongs to the chemokine-like receptor (CMKLR) family. Widely expressed in several tissues including adipose, muscle, liver and brain.

It is found in the cell membrane. Receptor for the chemoattractant adipokine chemerin/RARRES2 and for the omega-3 fatty acid derived molecule resolvin E1. Interaction with RARRES2 initiates activation of G proteins G(i)/G(o) and beta-arrestin pathways inducing cellular responses via second messenger pathways such as intracellular calcium mobilization, phosphorylation of MAP kinases MAPK1/MAPK3 (ERK1/2), TYRO3, MAPK14/P38MAPK and PI3K leading to multifunctional effects, like, reduction of immune responses, enhancing of adipogenesis and angionesis. Resolvin E1 down-regulates cytokine production in macrophages by reducing the activation of MAPK1/3 (ERK1/2) and NF-kappa-B. Positively regulates adipogenesis and adipocyte metabolism. This Bos taurus (Bovine) protein is Chemerin-like receptor 1 (CMLKR1).